The following is a 281-amino-acid chain: Fructose-bisphosphate aldolase class 1 (281 aa).

Lys191 functions as the Schiff-base intermediate with dihydroxyacetone-P in the catalytic mechanism.

Belongs to the DeoC/FbaB aldolase family. Homooctamer.

It localises to the cytoplasm. It carries out the reaction beta-D-fructose 1,6-bisphosphate = D-glyceraldehyde 3-phosphate + dihydroxyacetone phosphate. Activated by citrate. This Pyrococcus furiosus (strain ATCC 43587 / DSM 3638 / JCM 8422 / Vc1) protein is Fructose-bisphosphate aldolase class 1 (fba).